The chain runs to 319 residues: Formimidoylglutamase (319 aa).

Mn(2+) is bound by residues H131, D154, H156, D158, C248, and D250.

Belongs to the arginase family. The cofactor is Mn(2+).

It carries out the reaction N-formimidoyl-L-glutamate + H2O = formamide + L-glutamate. It participates in amino-acid degradation; L-histidine degradation into L-glutamate; L-glutamate from N-formimidoyl-L-glutamate (hydrolase route): step 1/1. Its function is as follows. Catalyzes the conversion of N-formimidoyl-L-glutamate to L-glutamate and formamide. In Legionella pneumophila (strain Paris), this protein is Formimidoylglutamase.